Consider the following 132-residue polypeptide: CLAVATA3/ESR (CLE)-related protein 2-B (132 aa).

The signal sequence occupies residues 1–26; the sequence is MASRMGMVAILSLFVCALVASTSVNA. The tract at residues 68–132 is disordered; that stretch reads NRASKQLDRE…IGPPPFLDRY (65 aa). Hydroxyproline occurs at positions 82 and 85. O-linked (Ara...) hydroxyproline glycosylation is present at proline 85.

Belongs to the CLV3/ESR signal peptide family. In terms of processing, the O-glycosylation (arabinosylation) of the hydroxyproline Pro-85 enhances binding affinity of the ESR2Bp peptide for its receptor. In terms of tissue distribution, seed endosperm.

It localises to the secreted. The protein resides in the extracellular space. In terms of biological role, extracellular signal peptide that regulates cell fate. The chain is CLAVATA3/ESR (CLE)-related protein 2-B from Zea mays (Maize).